The following is a 349-amino-acid chain: Isopentenyl-diphosphate delta-isomerase (349 aa).

6–7 (RK) lines the substrate pocket. FMN-binding positions include 62 to 64 (AMT), S93, and N122. Q152 is a binding site for substrate. E153 serves as a coordination point for Mg(2+). Residues K184, T214, 258 to 259 (GG), and 280 to 281 (AG) contribute to the FMN site.

The protein belongs to the IPP isomerase type 2 family. As to quaternary structure, homooctamer. Dimer of tetramers. It depends on FMN as a cofactor. NADPH is required as a cofactor. Mg(2+) serves as cofactor.

Its subcellular location is the cytoplasm. It catalyses the reaction isopentenyl diphosphate = dimethylallyl diphosphate. Its function is as follows. Involved in the biosynthesis of isoprenoids. Catalyzes the 1,3-allylic rearrangement of the homoallylic substrate isopentenyl (IPP) to its allylic isomer, dimethylallyl diphosphate (DMAPP). In Bacillus cereus (strain ATCC 10987 / NRS 248), this protein is Isopentenyl-diphosphate delta-isomerase.